The sequence spans 612 residues: Elongation factor 4 (612 aa).

Residues 11–193 (KHIRNFSIVA…EIVKKVPAPN (183 aa)) form the tr-type G domain. GTP contacts are provided by residues 23 to 28 (DHGKST) and 140 to 143 (NKID).

The protein belongs to the TRAFAC class translation factor GTPase superfamily. Classic translation factor GTPase family. LepA subfamily.

Its subcellular location is the cell membrane. The enzyme catalyses GTP + H2O = GDP + phosphate + H(+). In terms of biological role, required for accurate and efficient protein synthesis under certain stress conditions. May act as a fidelity factor of the translation reaction, by catalyzing a one-codon backward translocation of tRNAs on improperly translocated ribosomes. Back-translocation proceeds from a post-translocation (POST) complex to a pre-translocation (PRE) complex, thus giving elongation factor G a second chance to translocate the tRNAs correctly. Binds to ribosomes in a GTP-dependent manner. This Lactobacillus gasseri (strain ATCC 33323 / DSM 20243 / BCRC 14619 / CIP 102991 / JCM 1131 / KCTC 3163 / NCIMB 11718 / NCTC 13722 / AM63) protein is Elongation factor 4.